A 116-amino-acid polypeptide reads, in one-letter code: Large ribosomal subunit protein bL19 (116 aa).

The protein belongs to the bacterial ribosomal protein bL19 family.

This protein is located at the 30S-50S ribosomal subunit interface and may play a role in the structure and function of the aminoacyl-tRNA binding site. This chain is Large ribosomal subunit protein bL19, found in Streptomyces griseus subsp. griseus (strain JCM 4626 / CBS 651.72 / NBRC 13350 / KCC S-0626 / ISP 5235).